A 331-amino-acid chain; its full sequence is Probable allantoicase (331 aa).

This sequence belongs to the allantoicase family.

It carries out the reaction allantoate + H2O = (S)-ureidoglycolate + urea. The protein operates within nitrogen metabolism; (S)-allantoin degradation; (S)-ureidoglycolate from allantoate (aminidohydrolase route): step 1/1. In Pseudomonas syringae pv. syringae (strain B728a), this protein is Probable allantoicase.